The sequence spans 307 residues: Coproporphyrin III ferrochelatase (307 aa).

Fe-coproporphyrin III-binding positions include Tyr-12, Arg-29, 45–46, Ser-53, and Tyr-124; that span reads RY. Positions 181 and 263 each coordinate Fe(2+).

It belongs to the ferrochelatase family.

It localises to the cytoplasm. The enzyme catalyses Fe-coproporphyrin III + 2 H(+) = coproporphyrin III + Fe(2+). Its pathway is porphyrin-containing compound metabolism; protoheme biosynthesis. Its function is as follows. Involved in coproporphyrin-dependent heme b biosynthesis. Catalyzes the insertion of ferrous iron into coproporphyrin III to form Fe-coproporphyrin III. The protein is Coproporphyrin III ferrochelatase of Staphylococcus epidermidis (strain ATCC 35984 / DSM 28319 / BCRC 17069 / CCUG 31568 / BM 3577 / RP62A).